The following is a 382-amino-acid chain: Alkanesulfonate monooxygenase (382 aa).

Belongs to the SsuD family.

The catalysed reaction is an alkanesulfonate + FMNH2 + O2 = an aldehyde + FMN + sulfite + H2O + 2 H(+). Catalyzes the desulfonation of aliphatic sulfonates. This is Alkanesulfonate monooxygenase from Pseudomonas putida (strain W619).